The chain runs to 212 residues: ER lumen protein-retaining receptor 2 (212 aa).

At Met-1 to Phe-4 the chain is on the lumenal side. A helical membrane pass occupies residues Arg-5 to Trp-24. The Cytoplasmic portion of the chain corresponds to Lys-25 to Ile-32. Residues Ser-33–Leu-52 form a helical membrane-spanning segment. Residues Arg-47 to Tyr-48 are interaction with the K-D-E-L motif on target proteins. At Thr-53 to Leu-58 the chain is on the lumenal side. The chain crosses the membrane as a helical span at residues Tyr-59–Tyr-79. The Cytoplasmic segment spans residues Met-80–Thr-92. Residues Phe-93–Asn-110 form a helical membrane-spanning segment. At His-111–Leu-116 the chain is on the lumenal side. A helical transmembrane segment spans residues Glu-117–Leu-135. Over Phe-136 to Thr-149 the chain is Cytoplasmic. Residues His-150 to Trp-168 form a helical membrane-spanning segment. Residues Arg-159 to Arg-169 form an interaction with the K-D-E-L motif on target proteins region. Residues Arg-169–Leu-178 are Lumenal-facing. A helical transmembrane segment spans residues Ile-179–Val-199. At Thr-200–Ala-212 the chain is on the cytoplasmic side. The segment at Lys-204–Lys-207 is important for recycling of cargo proteins with the sequence motif K-D-E-L from the Golgi to the endoplasmic reticulum.

Belongs to the ERD2 family.

The protein resides in the endoplasmic reticulum membrane. The protein localises to the golgi apparatus membrane. It localises to the cytoplasmic vesicle. Its subcellular location is the COPI-coated vesicle membrane. Its function is as follows. Receptor for the C-terminal sequence motif K-D-E-L that is present on endoplasmic reticulum resident proteins and that mediates their recycling from the Golgi back to the endoplasmic reticulum. Binding is pH dependent, and is optimal at pH 5-5.4. The chain is ER lumen protein-retaining receptor 2 (kdelr2) from Xenopus tropicalis (Western clawed frog).